Reading from the N-terminus, the 523-residue chain is Glucose-1-phosphate adenylyltransferase large subunit 1, chloroplastic/amyloplastic (523 aa).

A chloroplast-targeting transit peptide spans 1 to 49; that stretch reads MSSMQFSSVLPLEGKACVSPVRREGSACERLKIGDSSSIRHERASRRMC.

The protein belongs to the bacterial/plant glucose-1-phosphate adenylyltransferase family. Heterotetramer. Starchy endosperm and roots.

The protein resides in the plastid. The protein localises to the chloroplast. Its subcellular location is the amyloplast. It carries out the reaction alpha-D-glucose 1-phosphate + ATP + H(+) = ADP-alpha-D-glucose + diphosphate. Its pathway is glycan biosynthesis; starch biosynthesis. Highly active without 3'phosphoglycerate, and is only slightly affected by the activator 3'phosphoglycerate and inhibitor orthophosphate. This protein plays a role in synthesis of starch. It catalyzes the synthesis of the activated glycosyl donor, ADP-glucose from Glc-1-P and ATP. This Hordeum vulgare (Barley) protein is Glucose-1-phosphate adenylyltransferase large subunit 1, chloroplastic/amyloplastic.